Consider the following 1323-residue polypeptide: Receptor tyrosine-protein kinase let-23 (1323 aa).

An N-terminal signal peptide occupies residues 1–20 (MRYPPSIGSILLIIPIFLTF). Over 21-818 (FGNSNAQLWK…DIASRQRKTR (798 aa)) the chain is Extracellular. N-linked (GlcNAc...) asparagine glycosylation is found at Asn91 and Asn169. Cystine bridges form between Cys220–Cys228, Cys224–Cys236, Cys244–Cys251, Cys248–Cys262, Cys263–Cys271, Cys267–Cys279, Cys282–Cys291, Cys295–Cys322, Cys326–Cys337, Cys341–Cys356, and Cys359–Cys364. The N-linked (GlcNAc...) asparagine glycan is linked to Asn255. N-linked (GlcNAc...) asparagine glycosylation occurs at Asn376. Intrachain disulfides connect Cys520–Cys529, Cys524–Cys537, Cys540–Cys549, Cys553–Cys567, Cys570–Cys577, Cys574–Cys585, Cys588–Cys604, Cys608–Cys620, Cys623–Cys632, Cys627–Cys644, Cys647–Cys660, Cys670–Cys693, Cys696–Cys703, Cys700–Cys715, Cys717–Cys731, Cys735–Cys750, Cys753–Cys763, Cys757–Cys771, Cys774–Cys787, and Cys791–Cys805. Asn561 carries N-linked (GlcNAc...) asparagine glycosylation. N-linked (GlcNAc...) asparagine glycosylation is present at Asn655. N-linked (GlcNAc...) asparagine glycosylation occurs at Asn746. Asn776 carries an N-linked (GlcNAc...) asparagine glycan. Residues 819–839 (MVIIGSVLFGFAVMFLFILLV) form a helical membrane-spanning segment. Topologically, residues 840–1323 (YWRCQRIGKK…EEVSQKETCL (484 aa)) are cytoplasmic. The Protein kinase domain maps to 885 to 1152 (TKLDKKLGAG…EFCKVPQLFL (268 aa)). Residues 891-899 (LGAGAFGTV) and Lys919 contribute to the ATP site. Asp1010 acts as the Proton acceptor in catalysis. Over residues 1265–1289 (GQTELSPSNGDYYNQPNTPSSSSGY) the composition is skewed to polar residues. Positions 1265–1323 (GQTELSPSNGDYYNQPNTPSSSSGYYNEPHLKTKKPETSEEAEAVQYENEEVSQKETCL) are disordered. A compositionally biased stretch (basic and acidic residues) spans 1293–1302 (PHLKTKKPET). The span at 1303–1315 (SEEAEAVQYENEE) shows a compositional bias: acidic residues.

Belongs to the protein kinase superfamily. Tyr protein kinase family. EGF receptor subfamily. In terms of tissue distribution, expressed in vulval precursor cells (at protein level). Expressed in ALA neurons, 2 ventral head neurons, a single neuron in the tail, pharyngeal-intestinal valve and posterior arcade epithelial cells.

It localises to the apical cell membrane. The protein localises to the basolateral cell membrane. The catalysed reaction is L-tyrosyl-[protein] + ATP = O-phospho-L-tyrosyl-[protein] + ADP + H(+). Functionally, tyrosine-protein kinase receptor which, upon binding ligand lin-3, activates 2 signaling cascades: the let-60/Ras and MAP kinase signaling pathway and the let-60-independent phospholipase C-mediated Ca(2+) signaling pathway. Each pathway regulates distinct functions. By activating let-60/Ras, regulates larval development, induction of vulva cell precursors during vulva development, male spicule formation and posterior development of the epidermis. Probably by activating phospholipase plc-3 and inositol 1,4,5-trisphosphate receptor itr-1 signaling cascade downstream of ligand lin-3, plays a role in ovulation by promoting ovulatory gonadal sheath cell contractions. Probably by regulating neuronal transmission in ALA neurons, mediates, independently of let-60/Ras, the decrease in pharyngeal pumping and locomotion during the quiescent state that precedes each larval molt, downstream of lin-3 and upstream of plc-3. In Caenorhabditis elegans, this protein is Receptor tyrosine-protein kinase let-23.